We begin with the raw amino-acid sequence, 227 residues long: Uracil-DNA glycosylase (227 aa).

The active-site Proton acceptor is the Asp65.

It belongs to the uracil-DNA glycosylase (UDG) superfamily. UNG family.

It is found in the cytoplasm. The catalysed reaction is Hydrolyzes single-stranded DNA or mismatched double-stranded DNA and polynucleotides, releasing free uracil.. In terms of biological role, excises uracil residues from the DNA which can arise as a result of misincorporation of dUMP residues by DNA polymerase or due to deamination of cytosine. The protein is Uracil-DNA glycosylase of Bacillus velezensis (strain DSM 23117 / BGSC 10A6 / LMG 26770 / FZB42) (Bacillus amyloliquefaciens subsp. plantarum).